Consider the following 334-residue polypeptide: Trans-3-hydroxy-L-proline dehydratase (334 aa).

Cys91 acts as the Proton acceptor in catalysis. Substrate is bound by residues 92–93 (GH), Asp250, and 255–256 (GT).

Belongs to the proline racemase family.

It carries out the reaction trans-3-hydroxy-L-proline = 1-pyrroline-2-carboxylate + H2O. Its function is as follows. Catalyzes the dehydration of trans-3-hydroxy-L-proline (t3LHyp) to Delta(1)-pyrroline-2-carboxylate (Pyr2C). Is likely involved in a degradation pathway that converts t3LHyp to L-proline, which allows B.cereus to grow on t3LHyp as a sole carbon source. Displays no proline racemase activity. The chain is Trans-3-hydroxy-L-proline dehydratase from Bacillus cereus (strain ATCC 14579 / DSM 31 / CCUG 7414 / JCM 2152 / NBRC 15305 / NCIMB 9373 / NCTC 2599 / NRRL B-3711).